The following is a 336-amino-acid chain: Eukaryotic translation initiation factor 3 subunit I (336 aa).

5 WD repeats span residues 8-47 (GHERSLTQIKFNRDGDLLFSVSKDKIVCAWWTANGERLGT), 50-91 (GHLG…KVWE), 146-185 (CNESKATVAGWSYLGKYIIAGHEDGSVSQYDAKTGDQLEN), 190-229 (EFDHQINDIQFSADRTYFITASKDKSAKLISSRNLAILKT), and 287-326 (GHFGPLNTVGVHPNGTAYASGGEDGYVRVHHFDKPYFDFM).

It belongs to the eIF-3 subunit I family. Component of the eukaryotic translation initiation factor 3 (eIF-3) complex.

It localises to the cytoplasm. Component of the eukaryotic translation initiation factor 3 (eIF-3) complex, which is involved in protein synthesis of a specialized repertoire of mRNAs and, together with other initiation factors, stimulates binding of mRNA and methionyl-tRNAi to the 40S ribosome. The eIF-3 complex specifically targets and initiates translation of a subset of mRNAs involved in cell proliferation. This Aspergillus terreus (strain NIH 2624 / FGSC A1156) protein is Eukaryotic translation initiation factor 3 subunit I (tif34).